The primary structure comprises 65 residues: Lantibiotic lacticin 3147 A2 (65 aa).

A propeptide spanning residues 1–36 (MKEKNMKKNDTIELQLGKYLEDDMIELAEGDESHGG) is cleaved from the precursor. T37 bears the 2-oxobutanoic acid mark. 2,3-didehydrobutyrine occurs at positions 38 and 41. 2 positions are modified to 2,3-didehydroalanine (Ser): S45 and S48. Positions 52–56 (STNTC) form a cross-link, lanthionine (Ser-Cys). Cross-links (beta-methyllanthionine (Thr-Cys)) lie at residues 58–61 (TTKC) and 62–65 (TRAC).

Maturation of lantibiotics involves the enzymatic conversion of Thr, and Ser into dehydrated AA and the formation of thioether bonds with cysteine. This is followed by membrane translocation and cleavage of the modified precursor. In terms of processing, it is not established whether the 2,3-didehydrobutyrines are the E- or Z-isomers. In the NMR model they were assumed to be the Z-isomer.

It localises to the secreted. Functionally, lanthionine-containing peptide antibiotic (lantibiotic) active on Gram-positive bacteria. The bactericidal activity of lantibiotics is based on depolarization of energized bacterial cytoplasmic membranes, initiated by the formation of aqueous transmembrane pores. When present individually lacticin 3147 A2 exhibits weak activity towards L.lactis strain AM2 and L.lactis strain HP, and no activity towards L.lactis strain IFPL359, but when combined with lacticin 3147 A1 it displays strong activity towards all three strains. The sequence is that of Lantibiotic lacticin 3147 A2 from Lactococcus lactis subsp. lactis (Streptococcus lactis).